The sequence spans 344 residues: Fructose-1,6-bisphosphatase, cytosolic (344 aa).

Positions 71, 100, 121, 123, and 124 each coordinate Mg(2+). Residues 124–127 (DGSS), N215, Y247, Y267, and K277 each bind substrate. E283 serves as a coordination point for Mg(2+).

The protein belongs to the FBPase class 1 family. Requires Mg(2+) as cofactor.

It localises to the cytoplasm. It catalyses the reaction beta-D-fructose 1,6-bisphosphate + H2O = beta-D-fructose 6-phosphate + phosphate. This is Fructose-1,6-bisphosphatase, cytosolic from Oryza coarctata (Wild rice).